Reading from the N-terminus, the 200-residue chain is Small ribosomal subunit protein uS4 (200 aa).

The interval 20 to 41 (SGTGKELEKRPYAPGQHGPNQR) is disordered. The S4 RNA-binding domain occupies 92 to 155 (ARLDAVVYSL…LKLDIIAESV (64 aa)).

It belongs to the universal ribosomal protein uS4 family. As to quaternary structure, part of the 30S ribosomal subunit. Contacts protein S5. The interaction surface between S4 and S5 is involved in control of translational fidelity.

In terms of biological role, one of the primary rRNA binding proteins, it binds directly to 16S rRNA where it nucleates assembly of the body of the 30S subunit. Its function is as follows. With S5 and S12 plays an important role in translational accuracy. This Staphylococcus saprophyticus subsp. saprophyticus (strain ATCC 15305 / DSM 20229 / NCIMB 8711 / NCTC 7292 / S-41) protein is Small ribosomal subunit protein uS4.